Reading from the N-terminus, the 157-residue chain is Ribosomal RNA large subunit methyltransferase H (157 aa).

S-adenosyl-L-methionine contacts are provided by residues L73, G104, and 123–128; that span reads LGPLTL.

This sequence belongs to the RNA methyltransferase RlmH family. In terms of assembly, homodimer.

The protein localises to the cytoplasm. It carries out the reaction pseudouridine(1915) in 23S rRNA + S-adenosyl-L-methionine = N(3)-methylpseudouridine(1915) in 23S rRNA + S-adenosyl-L-homocysteine + H(+). Its function is as follows. Specifically methylates the pseudouridine at position 1915 (m3Psi1915) in 23S rRNA. In Xylella fastidiosa (strain M23), this protein is Ribosomal RNA large subunit methyltransferase H.